Here is a 414-residue protein sequence, read N- to C-terminus: MYHRNILVEQTDPEIFAAIQAENARQEHHIELIASENYASPAVMAAQGSQLTNKYAEGYPGRRYYGGCEYVDVAEQLAIDRIKQIFGADAANVQPHCGASANEAVFLAFLKPGDTIMGMSLAEGGHLTHGMALNMSGKWFNVVSYGLNDKEEIDYDAMERKAHETRPKLIIAGASAYSLRIDFERFAKVAKAVGAIFMVDIAHYAGLVAAGVYPNPVPHADVVTSTTHKSLRGPRGGIILMKAEHEKAINSAIFPGLQGGPLMHVIAAKAVAFKEALSPEFKTYQQQVLTNARIVAETLTQRGLRIVSGRTESHLMLVDLRAKGITGKEAEAVLGSAHMTINKNAIPNDPEKPMVTSGVRIGTPAMTTRGFKDEEARVTANLIADVLDNPRDAANIEAVRAKVNALTSRFPVYR.

Residues L121 and 125–127 each bind (6S)-5,6,7,8-tetrahydrofolate; that span reads GHL. K229 carries the N6-(pyridoxal phosphate)lysine modification.

Belongs to the SHMT family. As to quaternary structure, homodimer. It depends on pyridoxal 5'-phosphate as a cofactor.

It localises to the cytoplasm. The enzyme catalyses (6R)-5,10-methylene-5,6,7,8-tetrahydrofolate + glycine + H2O = (6S)-5,6,7,8-tetrahydrofolate + L-serine. The protein operates within one-carbon metabolism; tetrahydrofolate interconversion. Its pathway is amino-acid biosynthesis; glycine biosynthesis; glycine from L-serine: step 1/1. Functionally, catalyzes the reversible interconversion of serine and glycine with tetrahydrofolate (THF) serving as the one-carbon carrier. This reaction serves as the major source of one-carbon groups required for the biosynthesis of purines, thymidylate, methionine, and other important biomolecules. Also exhibits THF-independent aldolase activity toward beta-hydroxyamino acids, producing glycine and aldehydes, via a retro-aldol mechanism. The sequence is that of Serine hydroxymethyltransferase from Polaromonas sp. (strain JS666 / ATCC BAA-500).